Consider the following 145-residue polypeptide: MRTTPMANASNIERKWLVVDAAGKTLGRLSTEVASILRGKHKPTYTPHVDTGDHVIIINAEKIELTGKKLTDKIYYRHTQHPGGLKSRTALEMRTNYPEKMLELAIKGMLPKGSLGRQMFKKLNVYRGSEHPHQAQKPEVYELRG.

This sequence belongs to the universal ribosomal protein uL13 family. As to quaternary structure, part of the 50S ribosomal subunit.

In terms of biological role, this protein is one of the early assembly proteins of the 50S ribosomal subunit, although it is not seen to bind rRNA by itself. It is important during the early stages of 50S assembly. The chain is Large ribosomal subunit protein uL13 from Bacillus licheniformis (strain ATCC 14580 / DSM 13 / JCM 2505 / CCUG 7422 / NBRC 12200 / NCIMB 9375 / NCTC 10341 / NRRL NRS-1264 / Gibson 46).